Reading from the N-terminus, the 568-residue chain is N66 matrix protein (568 aa).

An N-terminal signal peptide occupies residues 1 to 22 (MWRMTTLLHLTALLVLIPLCHC). Positions 55–567 (AGFSYNRDIC…KHPLRVYKNS (513 aa)) constitute an Alpha-carbonic anhydrase domain. Residues His154, His156, and His179 each contribute to the Zn(2+) site. The tract at residues 259 to 421 (NGNNGNNGNG…NGYNGDNGNS (163 aa)) is disordered. Over residues 280-290 (GNNGNGNGNNG) the composition is skewed to gly residues. A compositionally biased stretch (low complexity) spans 291–318 (YNGNNGYNGNNGNNGNGNNDNNGNDNNG). Composition is skewed to gly residues over residues 319–352 (NNGG…GNNG) and 362–380 (NGNG…GNNG). N-linked (GlcNAc...) asparagine glycosylation is present at Asn389. Residues 390–413 (GSNGNNGGNGNNGNNGDNGNGDNG) are compositionally biased toward gly residues. 506–507 (TT) contacts substrate. A glycan (N-linked (GlcNAc...) asparagine) is linked at Asn511.

Belongs to the alpha-carbonic anhydrase family. In terms of assembly, homooligomer; disulfide-linked. May also be disulfide-linked to insoluble organic matrix. Requires Zn(2+) as cofactor. In terms of tissue distribution, expressed in both the dorsal region of the mantle and the mantle edge. Is dispersed in calcium carbonate and also linked by disulfide bonds to the organic core of nacre.

Its subcellular location is the secreted. The protein resides in the extracellular space. It localises to the extracellular matrix. It catalyses the reaction hydrogencarbonate + H(+) = CO2 + H2O. In terms of biological role, acts as a negative regulator for calcification in the shells of mollusks. May function both as a calcium concentrator and as a carbonic anhydrase required for production of carbonate ions, which are assembled to CaCO(3) at mineralization sites. Is important for shell formation in both the calcitic prismatic layer and the aragonitic nacreous layer. This Pinctada maxima (Silver-lipped pearl oyster) protein is N66 matrix protein.